Consider the following 567-residue polypeptide: uncharacterized protein (567 aa).

The Lumenal portion of the chain corresponds to 1–31; sequence MLDTILINVFRRDGDDDDDDGQDPALQELYS. The helical transmembrane segment at 32–52 threads the bilayer; sequence SWALFILLVLLIGALLTSYYV. The Cytoplasmic segment spans residues 53-64; that stretch reads QSKKIRAIHETV. A helical transmembrane segment spans residues 65-85; it reads ISVFVGMVVGLIIRVSPGLII. Over 86–87 the chain is Lumenal; that stretch reads QN. Residues 88 to 108 form a helical membrane-spanning segment; sequence MVSFHSTYFFNVLLPPIILNS. Residues 109-128 are Cytoplasmic-facing; the sequence is GYELHQSNFFRNIGTILTFA. Residues 129–149 form a helical membrane-spanning segment; sequence FAGTFISAVTLGVLVYIFSFL. Residues 150–159 are Lumenal-facing; the sequence is NFENLSMTFV. The helical transmembrane segment at 160-180 threads the bilayer; sequence EALSMGATLSATDPVTVLAIF. Topologically, residues 181–188 are cytoplasmic; that stretch reads NSYKVDQK. Residues 189–209 form a helical membrane-spanning segment; that stretch reads LYTIIFGESILNDAVAIVMFE. Topologically, residues 210–227 are lumenal; it reads TLQQFQGKTLHFFTLFSG. A helical membrane pass occupies residues 228 to 248; that stretch reads IGIFIITFFISLLIGVSIGLI. The Cytoplasmic segment spans residues 249–277; the sequence is TALLLKYSYLRRYPSIESCIILLMAYTSY. Residues 278-298 form a helical membrane-spanning segment; sequence FFSNGCHMSGVVSLLFCGITL. At 299–315 the chain is on the lumenal side; that stretch reads KHYAFFNMSYKAKLSTK. Residues 316-338 form a helical membrane-spanning segment; it reads YVFRVLAQLSENFIFIYLGMSLF. The Cytoplasmic portion of the chain corresponds to 339-347; sequence TQVDLVYKP. The helical transmembrane segment at 348–366 threads the bilayer; that stretch reads IFILITTVAVTASRYMNVF. The Lumenal portion of the chain corresponds to 367-392; that stretch reads PLSNLLNKFHRQRNGNLIDHIPYSYQ. Residues 393–413 form a helical membrane-spanning segment; it reads MMLFWAGLRGAVGVALAAGFE. Over 414–424 the chain is Cytoplasmic; it reads GENAQTLRATT. The helical transmembrane segment at 425 to 445 threads the bilayer; the sequence is LVVVVLTLIIFGGTTARMLEI. Over 446 to 567 the chain is Lumenal; it reads LHIETGVAAD…RDNLKNGTKK (122 aa). Serine 515 bears the Phosphoserine mark.

Belongs to the monovalent cation:proton antiporter 1 (CPA1) transporter (TC 2.A.36) family.

Its subcellular location is the golgi apparatus membrane. This is an uncharacterized protein from Schizosaccharomyces pombe (strain 972 / ATCC 24843) (Fission yeast).